Here is a 125-residue protein sequence, read N- to C-terminus: Small ribosomal subunit protein uS12 (125 aa).

3-methylthioaspartic acid is present on Asp89.

It belongs to the universal ribosomal protein uS12 family. Part of the 30S ribosomal subunit. Contacts proteins S8 and S17. May interact with IF1 in the 30S initiation complex.

Functionally, with S4 and S5 plays an important role in translational accuracy. Interacts with and stabilizes bases of the 16S rRNA that are involved in tRNA selection in the A site and with the mRNA backbone. Located at the interface of the 30S and 50S subunits, it traverses the body of the 30S subunit contacting proteins on the other side and probably holding the rRNA structure together. The combined cluster of proteins S8, S12 and S17 appears to hold together the shoulder and platform of the 30S subunit. This Wigglesworthia glossinidia brevipalpis protein is Small ribosomal subunit protein uS12.